The primary structure comprises 1446 residues: ABC-type transporter oblD (1446 aa).

N-linked (GlcNAc...) asparagine glycans are attached at residues Asn-9, Asn-28, Asn-222, Asn-281, and Asn-305. The region spanning 104–357 (LEVLSLVSKA…FLDMGFVCPD (254 aa)) is the ABC transporter 1 domain. Transmembrane regions (helical) follow at residues 468–488 (VTIS…SIFY), 502–522 (ALLF…MLTL), 548–568 (MIMD…VLYF), 577–597 (GAFF…SMFF), 610–630 (ALPF…FTIP), and 719–739 (IGVI…ATDF). The ABC transporter 2 domain occupies 796–1038 (FQWKDVCFDI…ILIDYFVRNG (243 aa)). 832-839 (GVSGAGKT) is an ATP binding site. 5 helical membrane passes run 1147–1167 (ALCV…PNTI), 1177–1197 (IFML…HFVA), 1217–1237 (FIIS…VLMF), 1265–1285 (LMVW…IAAF), and 1301–1321 (LCLI…FWIF). Residues Asn-1344 and Asn-1359 are each glycosylated (N-linked (GlcNAc...) asparagine). A helical transmembrane segment spans residues 1412 to 1432 (FGLMWVFIVFNIFAACLLYWW).

This sequence belongs to the ABC transporter superfamily. ABCG family. PDR (TC 3.A.1.205) subfamily.

The protein localises to the cell membrane. In terms of biological role, ABC-type transporter; part of the gene cluster that mediates the biosynthesis of the sesterterpenes ophiobolins, fungal phytotoxins with potential anti-cancer activities. Acts as a specific transporter involved in ophiobolins secretion. The polypeptide is ABC-type transporter oblD (Aspergillus clavatus (strain ATCC 1007 / CBS 513.65 / DSM 816 / NCTC 3887 / NRRL 1 / QM 1276 / 107)).